A 335-amino-acid chain; its full sequence is tRNA N6-adenosine threonylcarbamoyltransferase (335 aa).

His110 and His114 together coordinate Fe cation. Substrate is bound by residues 132–136 (LVSGG), Asp165, Gly178, and Asn271. Asp299 provides a ligand contact to Fe cation.

The protein belongs to the KAE1 / TsaD family. Requires Fe(2+) as cofactor.

Its subcellular location is the cytoplasm. It catalyses the reaction L-threonylcarbamoyladenylate + adenosine(37) in tRNA = N(6)-L-threonylcarbamoyladenosine(37) in tRNA + AMP + H(+). In terms of biological role, required for the formation of a threonylcarbamoyl group on adenosine at position 37 (t(6)A37) in tRNAs that read codons beginning with adenine. Is involved in the transfer of the threonylcarbamoyl moiety of threonylcarbamoyl-AMP (TC-AMP) to the N6 group of A37, together with TsaE and TsaB. TsaD likely plays a direct catalytic role in this reaction. In Campylobacter jejuni subsp. jejuni serotype O:6 (strain 81116 / NCTC 11828), this protein is tRNA N6-adenosine threonylcarbamoyltransferase.